The chain runs to 233 residues: MNSANSALVLFSGGQDSTTCLAWALTHYARVETIGFDYGQRHAIELAVRPFLLEKMRLISPEWDGRLGADHMIDLSLIAKISNTALTSNVEIAMLENGLPNTFVPGRNLLFMTVAATVAYRRGLDVLVGGMCETDFSGYPDCRDDTMKALQVTLNLGMATKLKVETPLMWIDKAATWKMAQDLGGTPLLNLVRTGTHTCYLGERGELHDWGYGCGNCPACKLRARGYADFIAG.

11 to 21 (FSGGQDSTTCL) lines the ATP pocket. 4 residues coordinate Zn(2+): C199, C214, C217, and C220.

Belongs to the QueC family. Requires Zn(2+) as cofactor.

The catalysed reaction is 7-carboxy-7-deazaguanine + NH4(+) + ATP = 7-cyano-7-deazaguanine + ADP + phosphate + H2O + H(+). It participates in purine metabolism; 7-cyano-7-deazaguanine biosynthesis. Functionally, catalyzes the ATP-dependent conversion of 7-carboxy-7-deazaguanine (CDG) to 7-cyano-7-deazaguanine (preQ(0)). The protein is 7-cyano-7-deazaguanine synthase of Herminiimonas arsenicoxydans.